A 292-amino-acid polypeptide reads, in one-letter code: Putative FNIP repeat-containing protein L281 (292 aa).

Residues 95–134 (FNKSIDDIPSTITHLSLGAAFNGEVSNIPTSVTHLKLGVS) form an FNIP repeat.

The chain is Putative FNIP repeat-containing protein L281 from Acanthamoeba polyphaga mimivirus (APMV).